The primary structure comprises 262 residues: Acyl-[acyl-carrier-protein]--UDP-N-acetylglucosamine O-acyltransferase (262 aa).

The protein belongs to the transferase hexapeptide repeat family. LpxA subfamily. As to quaternary structure, homotrimer.

It localises to the cytoplasm. It carries out the reaction a (3R)-hydroxyacyl-[ACP] + UDP-N-acetyl-alpha-D-glucosamine = a UDP-3-O-[(3R)-3-hydroxyacyl]-N-acetyl-alpha-D-glucosamine + holo-[ACP]. It participates in glycolipid biosynthesis; lipid IV(A) biosynthesis; lipid IV(A) from (3R)-3-hydroxytetradecanoyl-[acyl-carrier-protein] and UDP-N-acetyl-alpha-D-glucosamine: step 1/6. Its function is as follows. Involved in the biosynthesis of lipid A, a phosphorylated glycolipid that anchors the lipopolysaccharide to the outer membrane of the cell. This is Acyl-[acyl-carrier-protein]--UDP-N-acetylglucosamine O-acyltransferase from Blochmanniella floridana.